The chain runs to 360 residues: GTPase Obg (360 aa).

The 156-residue stretch at 1–156 (MFVDSVEIII…KCVRLELKLI (156 aa)) folds into the Obg domain. Residues 157-360 (ADIGLVGFPN…LKFVLLEALP (204 aa)) form the OBG-type G domain. Residues 163-170 (GFPNAGKS), 188-192 (FTTLV), 210-213 (DIPG), 279-282 (NKCD), and 341-343 (SAV) each bind GTP. Residues serine 170 and threonine 190 each contribute to the Mg(2+) site.

It belongs to the TRAFAC class OBG-HflX-like GTPase superfamily. OBG GTPase family. In terms of assembly, monomer. Mg(2+) serves as cofactor.

The protein localises to the cytoplasm. Its function is as follows. An essential GTPase which binds GTP, GDP and possibly (p)ppGpp with moderate affinity, with high nucleotide exchange rates and a fairly low GTP hydrolysis rate. Plays a role in control of the cell cycle, stress response, ribosome biogenesis and in those bacteria that undergo differentiation, in morphogenesis control. The protein is GTPase Obg of Helicobacter acinonychis (strain Sheeba).